The chain runs to 297 residues: ATP synthase gamma chain (297 aa).

The protein belongs to the ATPase gamma chain family. As to quaternary structure, F-type ATPases have 2 components, CF(1) - the catalytic core - and CF(0) - the membrane proton channel. CF(1) has five subunits: alpha(3), beta(3), gamma(1), delta(1), epsilon(1). CF(0) has three main subunits: a, b and c.

Its subcellular location is the cell membrane. Functionally, produces ATP from ADP in the presence of a proton gradient across the membrane. The gamma chain is believed to be important in regulating ATPase activity and the flow of protons through the CF(0) complex. In Micrococcus luteus (strain ATCC 4698 / DSM 20030 / JCM 1464 / CCM 169 / CCUG 5858 / IAM 1056 / NBRC 3333 / NCIMB 9278 / NCTC 2665 / VKM Ac-2230) (Micrococcus lysodeikticus), this protein is ATP synthase gamma chain.